We begin with the raw amino-acid sequence, 294 residues long: Holothin acyltransferase (294 aa).

One can recognise an N-acetyltransferase domain in the interval 17–146 (WTSKPASLEE…SRLVGIHNQQ (130 aa)).

It catalyses the reaction marinoloyl-CoA C + holothin = thiomarinol C + CoA. The enzyme catalyses pseudomonoyl-CoA C + holothin = pseudomonic acid C--holothin + CoA. It functions in the pathway antibiotic biosynthesis. Acyltransferase that catalyzes the formation of pseudomonic acid C-holothin (PAC-holothin), a thiomarinol analog, from pseudomonoyl-CoA C (PAC-CoA) and holothin. Accepts linear CoA substrates of different lengths, including propionyl-, hexanoyl-, octanoyl-, oleoyl- and dodecanoyl-CoA, readily converting all into the corresponding acyl-holothin adducts. In vivo, is probably involved in the biosynthesis of thiomarinol, a naturally occurring double-headed antibiotic. The polypeptide is Holothin acyltransferase (Pseudoalteromonas sp. (strain SANK 73390)).